A 419-amino-acid polypeptide reads, in one-letter code: S-adenosylmethionine synthase (419 aa).

His15 is a binding site for ATP. Residue Asp17 coordinates Mg(2+). K(+) is bound at residue Glu43. Positions 56 and 100 each coordinate L-methionine. The interval 100-110 is flexible loop; the sequence is QSPDIAQGVNE. Residues 171–173, 248–249, Asp257, 263–264, Ala280, and Lys284 contribute to the ATP site; these read DGK, KF, and RK. Residue Asp257 participates in L-methionine binding. Residue Lys288 coordinates L-methionine.

This sequence belongs to the AdoMet synthase family. In terms of assembly, homotetramer; dimer of dimers. The cofactor is Mg(2+). K(+) serves as cofactor.

It localises to the cytoplasm. It carries out the reaction L-methionine + ATP + H2O = S-adenosyl-L-methionine + phosphate + diphosphate. Its pathway is amino-acid biosynthesis; S-adenosyl-L-methionine biosynthesis; S-adenosyl-L-methionine from L-methionine: step 1/1. Its function is as follows. Catalyzes the formation of S-adenosylmethionine (AdoMet) from methionine and ATP. The overall synthetic reaction is composed of two sequential steps, AdoMet formation and the subsequent tripolyphosphate hydrolysis which occurs prior to release of AdoMet from the enzyme. This Prochlorococcus marinus (strain MIT 9303) protein is S-adenosylmethionine synthase.